A 570-amino-acid polypeptide reads, in one-letter code: Cation/calcium exchanger 1 (570 aa).

13 consecutive transmembrane segments (helical) span residues 14 to 34, 97 to 117, 141 to 161, 176 to 196, 212 to 232, 235 to 255, 344 to 364, 371 to 391, 401 to 421, 427 to 447, 479 to 499, 513 to 533, and 546 to 566; these read LSLL…ASQT, SPVL…YLLG, MAGV…SSVV, ILGG…VLIG, VFLL…KVTI, ALCY…SHFF, CAVV…CSHY, LILY…AYLT, FSLV…YMIA, LLIS…LTVL, YAGP…ISSL, SLLE…VIMP, and GLLA…FGVL.

This sequence belongs to the Ca(2+):cation antiporter (CaCA) (TC 2.A.19) family. Cation/calcium exchanger (CCX) subfamily. As to expression, expressed in roots, leaves, stems and flowers.

The protein resides in the vacuole membrane. Vacuolar membrane-localized H(+)-dependent K(+) and Na(+) transporter. The sequence is that of Cation/calcium exchanger 1 (CCX1) from Arabidopsis thaliana (Mouse-ear cress).